We begin with the raw amino-acid sequence, 348 residues long: Protein RecA (348 aa).

64–71 (GPESSGKT) provides a ligand contact to ATP. The tract at residues 328-348 (DTGGAAPAQEDEAQAQEELEF) is disordered. Residues 336–348 (QEDEAQAQEELEF) show a composition bias toward acidic residues.

The protein belongs to the RecA family.

The protein localises to the cytoplasm. Functionally, can catalyze the hydrolysis of ATP in the presence of single-stranded DNA, the ATP-dependent uptake of single-stranded DNA by duplex DNA, and the ATP-dependent hybridization of homologous single-stranded DNAs. It interacts with LexA causing its activation and leading to its autocatalytic cleavage. This chain is Protein RecA, found in Bacillus licheniformis (strain ATCC 14580 / DSM 13 / JCM 2505 / CCUG 7422 / NBRC 12200 / NCIMB 9375 / NCTC 10341 / NRRL NRS-1264 / Gibson 46).